The sequence spans 153 residues: uncharacterized protein (153 aa).

A disordered region spans residues 16 to 40 (DEQTPLLNNDGIQRTPPSAEADMSL). A compositionally biased stretch (polar residues) spans 20–31 (PLLNNDGIQRTP).

This is an uncharacterized protein from Schizosaccharomyces pombe (strain 972 / ATCC 24843) (Fission yeast).